Reading from the N-terminus, the 374-residue chain is Carnitine monooxygenase oxygenase subunit (374 aa).

Residues 47-155 (WICVAHSSEL…LEEYAGFVFI (109 aa)) form the Rieske domain. Residues Cys-89, His-91, Cys-109, and His-112 each contribute to the [2Fe-2S] cluster site. His-211, His-216, and Asp-325 together coordinate Fe cation.

It belongs to the bacterial ring-hydroxylating dioxygenase alpha subunit family. CntA subfamily. Composed of an oxygenase subunit and a reductase subunit. It depends on [2Fe-2S] cluster as a cofactor. Requires Fe cation as cofactor.

The catalysed reaction is (R)-carnitine + NADH + O2 + H(+) = (3R)-3-hydroxy-4-oxobutanoate + trimethylamine + NAD(+) + H2O. It carries out the reaction (R)-carnitine + NADPH + O2 + H(+) = (3R)-3-hydroxy-4-oxobutanoate + trimethylamine + NADP(+) + H2O. It participates in amine and polyamine metabolism; carnitine metabolism. Its function is as follows. Converts carnitine to trimethylamine and malic semialdehyde. This is Carnitine monooxygenase oxygenase subunit (yeaW) from Escherichia coli O157:H7.